Here is a 105-residue protein sequence, read N- to C-terminus: MKFLSLFFLALAGVAFAHDGGMGGMDMIKSYSILGAMIGLGIAAFGGAIGMGNAAAATITGTARNPGVGGKLLTTMFVAMAMIEAQVIYTLVFAIIAIYSNPFLS.

3 helical membrane-spanning segments follow: residues 3 to 23, 32 to 52, and 78 to 98; these read FLSLFFLALAGVAFAHDGGMG, SILGAMIGLGIAAFGGAIGMG, and VAMAMIEAQVIYTLVFAIIAI.

This sequence belongs to the ATPase C chain family. As to quaternary structure, F-type ATPases have 2 components, F(1) - the catalytic core - and F(0) - the membrane proton channel. F(1) has five subunits: alpha(3), beta(3), gamma(1), delta(1), epsilon(1). F(0) has three main subunits: a(1), b(2) and c(10-14). The alpha and beta chains form an alternating ring which encloses part of the gamma chain. F(1) is attached to F(0) by a central stalk formed by the gamma and epsilon chains, while a peripheral stalk is formed by the delta and b chains.

It is found in the cell inner membrane. In terms of biological role, f(1)F(0) ATP synthase produces ATP from ADP in the presence of a proton or sodium gradient. F-type ATPases consist of two structural domains, F(1) containing the extramembraneous catalytic core and F(0) containing the membrane proton channel, linked together by a central stalk and a peripheral stalk. During catalysis, ATP synthesis in the catalytic domain of F(1) is coupled via a rotary mechanism of the central stalk subunits to proton translocation. Key component of the F(0) channel; it plays a direct role in translocation across the membrane. A homomeric c-ring of between 10-14 subunits forms the central stalk rotor element with the F(1) delta and epsilon subunits. The chain is ATP synthase subunit c from Helicobacter pylori (strain Shi470).